A 277-amino-acid chain; its full sequence is Bifunctional protein FolD (277 aa).

NADP(+)-binding positions include 164–166, S189, and T230; that span reads GRS.

It belongs to the tetrahydrofolate dehydrogenase/cyclohydrolase family. As to quaternary structure, homodimer.

It carries out the reaction (6R)-5,10-methylene-5,6,7,8-tetrahydrofolate + NADP(+) = (6R)-5,10-methenyltetrahydrofolate + NADPH. The enzyme catalyses (6R)-5,10-methenyltetrahydrofolate + H2O = (6R)-10-formyltetrahydrofolate + H(+). It participates in one-carbon metabolism; tetrahydrofolate interconversion. Functionally, catalyzes the oxidation of 5,10-methylenetetrahydrofolate to 5,10-methenyltetrahydrofolate and then the hydrolysis of 5,10-methenyltetrahydrofolate to 10-formyltetrahydrofolate. The chain is Bifunctional protein FolD from Clostridium perfringens (strain 13 / Type A).